Consider the following 288-residue polypeptide: uncharacterized protein (288 aa).

This is an uncharacterized protein from Haemophilus influenzae (strain ATCC 51907 / DSM 11121 / KW20 / Rd).